We begin with the raw amino-acid sequence, 506 residues long: MGTYPAFSGSLQLPEQRLHGTSNLHPAGGYRIELQVQDATFDKYPAKQHAQRVAAKLKKEKGLIFLMGQKAALLEDSDQETRFRQRRYFFYMSGVNEADCDLTYDIQSDKLTLYVPNFDLRREIWMGPTLGPEEALKRFDIDEAKYQSFLEGDIKQWASCSGHGSTIYILHGSQKPTGDFPNVLMDSETLKPAMNACRVVKDEHEIELMRHANRVSSAAHIAVLQGIRKMTNEAQIEGSFLNTCVSLGAHNQAYGIIAASGANAATLHYSKNNEPLKGRQFVCLDAGAEWDCYASDVTRTFPTAARWPGTEAEQIYALVQNMQESCILRIKEGVRYLDLHYLAHDILIHGFLAIGIFKAGRAEEIKKSGASSLFFPHGLGHHIGLEVHDVSPDSLFAQDNDRTTDSWLFSSTYLSPCTASSPTLKSGMVVTVEPGIYFSQIALDNAKSEQLKHIDMDVVKRYMAVGGVRIEDDILVTKDGFENLTLAPKGQAMLDYIQQGNGSCNI.

Mn(2+) is bound by residues D285, D296, E433, and E471.

Belongs to the peptidase M24B family. Mn(2+) serves as cofactor.

The catalysed reaction is Release of any N-terminal amino acid, including proline, that is linked to proline, even from a dipeptide or tripeptide.. Functionally, catalyzes the removal of a penultimate prolyl residue from the N-termini of peptides. This is Probable Xaa-Pro aminopeptidase PAAG_05466 from Paracoccidioides lutzii (strain ATCC MYA-826 / Pb01) (Paracoccidioides brasiliensis).